A 262-amino-acid chain; its full sequence is Acyl-[acyl-carrier-protein]--UDP-N-acetylglucosamine O-acyltransferase (262 aa).

This sequence belongs to the transferase hexapeptide repeat family. LpxA subfamily. Homotrimer.

It localises to the cytoplasm. The enzyme catalyses a (3R)-hydroxyacyl-[ACP] + UDP-N-acetyl-alpha-D-glucosamine = a UDP-3-O-[(3R)-3-hydroxyacyl]-N-acetyl-alpha-D-glucosamine + holo-[ACP]. Its pathway is glycolipid biosynthesis; lipid IV(A) biosynthesis; lipid IV(A) from (3R)-3-hydroxytetradecanoyl-[acyl-carrier-protein] and UDP-N-acetyl-alpha-D-glucosamine: step 1/6. Involved in the biosynthesis of lipid A, a phosphorylated glycolipid that anchors the lipopolysaccharide to the outer membrane of the cell. This chain is Acyl-[acyl-carrier-protein]--UDP-N-acetylglucosamine O-acyltransferase, found in Shigella boydii serotype 18 (strain CDC 3083-94 / BS512).